Here is a 165-residue protein sequence, read N- to C-terminus: Putative 4-hydroxy-4-methyl-2-oxoglutarate aldolase (165 aa).

Residues 80–83 (GGNL) and Arg102 each bind substrate. Residue Asp103 participates in a divalent metal cation binding.

Belongs to the class II aldolase/RraA-like family. As to quaternary structure, homotrimer. It depends on a divalent metal cation as a cofactor.

The enzyme catalyses 4-hydroxy-4-methyl-2-oxoglutarate = 2 pyruvate. It catalyses the reaction oxaloacetate + H(+) = pyruvate + CO2. Catalyzes the aldol cleavage of 4-hydroxy-4-methyl-2-oxoglutarate (HMG) into 2 molecules of pyruvate. Also contains a secondary oxaloacetate (OAA) decarboxylase activity due to the common pyruvate enolate transition state formed following C-C bond cleavage in the retro-aldol and decarboxylation reactions. The sequence is that of Putative 4-hydroxy-4-methyl-2-oxoglutarate aldolase from Burkholderia mallei (strain NCTC 10247).